Here is a 535-residue protein sequence, read N- to C-terminus: Putative beta-glucosidase 41 (535 aa).

Positions 1–27 are cleaved as a signal peptide; the sequence is MESLMRLVLVLFPFFVVFFVPLDHVSS. Glutamine 49 contributes to the a beta-D-glucoside binding site. Residue asparagine 118 is glycosylated (N-linked (GlcNAc...) asparagine). Residues histidine 151 and 196-197 contribute to the a beta-D-glucoside site; that span reads NE. Glutamate 197 acts as the Proton donor in catalysis. The cysteines at positions 216 and 224 are disulfide-linked. The a beta-D-glucoside site is built by tyrosine 340 and glutamate 413. Glutamate 413 acts as the Nucleophile in catalysis. The N-linked (GlcNAc...) asparagine glycan is linked to asparagine 445. A beta-D-glucoside-binding positions include tryptophan 463, 470–471, and phenylalanine 479; that span reads EW. Asparagine 489 carries an N-linked (GlcNAc...) asparagine glycan.

The protein belongs to the glycosyl hydrolase 1 family.

The catalysed reaction is Hydrolysis of terminal, non-reducing beta-D-glucosyl residues with release of beta-D-glucose.. The sequence is that of Putative beta-glucosidase 41 from Arabidopsis thaliana (Mouse-ear cress).